A 188-amino-acid polypeptide reads, in one-letter code: GMP synthase [glutamine-hydrolyzing] subunit A (188 aa).

Positions 2 to 188 (KVGLVYYGGQ…FKNFLGVCRK (187 aa)) constitute a Glutamine amidotransferase type-1 domain. The active-site Nucleophile is cysteine 79. Catalysis depends on residues histidine 166 and glutamate 168.

Heterodimer composed of a glutamine amidotransferase subunit (A) and a GMP-binding subunit (B).

It catalyses the reaction XMP + L-glutamine + ATP + H2O = GMP + L-glutamate + AMP + diphosphate + 2 H(+). It functions in the pathway purine metabolism; GMP biosynthesis; GMP from XMP (L-Gln route): step 1/1. In terms of biological role, catalyzes the synthesis of GMP from XMP. The protein is GMP synthase [glutamine-hydrolyzing] subunit A of Saccharolobus solfataricus (strain ATCC 35092 / DSM 1617 / JCM 11322 / P2) (Sulfolobus solfataricus).